The chain runs to 56 residues: Attractin (56 aa).

Cystine bridges form between Cys4–Cys41, Cys13–Cys33, and Cys20–Cys26. Asn25 is a glycosylation site (N-linked (GlcNAc...) asparagine).

In terms of tissue distribution, produced by the albumen gland of the egg cordons.

It is found in the secreted. Water-borne pheromone that attract the marine mollusk Aplysia into breeding aggregations and coordinate male and female reproductive behavior within the aggregation. This Aplysia depilans (Sea hare) protein is Attractin (ATT).